A 186-amino-acid polypeptide reads, in one-letter code: Transcription factor FapR (186 aa).

It belongs to the FapR family.

In terms of biological role, transcriptional factor involved in regulation of membrane lipid biosynthesis by repressing genes involved in fatty acid and phospholipid metabolism. In Staphylococcus epidermidis (strain ATCC 35984 / DSM 28319 / BCRC 17069 / CCUG 31568 / BM 3577 / RP62A), this protein is Transcription factor FapR.